Here is a 1464-residue protein sequence, read N- to C-terminus: ABC transporter G family member 35 (1464 aa).

The segment at 1–26 (MDAAAEMQKVVSLRRGGGGSSSRGAA) is disordered. The ABC transporter 1 domain maps to 173-446 (ANALGILPNK…FELMGFKCPE (274 aa)). 206-213 (GPPGSGKT) lines the ATP pocket. An ABC transmembrane type-2 1 domain is found at 524 to 737 (ELLKANIDRE…AQNAISVNEF (214 aa)). 7 consecutive transmembrane segments (helical) span residues 542–562 (FVYI…MTVF), 575–595 (GVIF…NGLS), 630–650 (IPMS…VIGF), 662–682 (LLML…GGAA), 686–706 (IVAN…GGFI), 715–735 (WWIW…ISVN), and 774–794 (IGFG…TLAL). One can recognise an ABC transporter 2 domain in the interval 867 to 1119 (LTFDNIKYSV…ELIKYFEGIK (253 aa)). An ATP-binding site is contributed by 912–919 (GVSGAGKT). Residues 1192-1406 (NQCLACLWKM…TLYGLVASQF (215 aa)) enclose the ABC transmembrane type-2 2 domain. The next 7 helical transmembrane spans lie at 1213 to 1233 (AIRL…FWDL), 1243 to 1263 (LFNA…LNSQ), 1299 to 1319 (FPYT…MIGF), 1326 to 1346 (FFWY…YGMM), 1356 to 1376 (VASI…GFII), 1387 to 1407 (WYCW…SQFG), and 1436 to 1456 (VVAV…GFAI).

This sequence belongs to the ABC transporter superfamily. ABCG family. PDR (TC 3.A.1.205) subfamily.

The protein localises to the membrane. In terms of biological role, may be a general defense protein. The polypeptide is ABC transporter G family member 35 (Oryza sativa subsp. japonica (Rice)).